Reading from the N-terminus, the 443-residue chain is Protein king tubby (443 aa).

Disordered stretches follow at residues 57–80 (TNGS…NNMR) and 98–191 (HELE…EGDV). Over residues 68–80 (AMNTSRNHSNNMR) the composition is skewed to polar residues. The segment covering 113–128 (QHQQSASHSANSTQSQ) has biased composition (low complexity). Ser-136 is subject to Phosphoserine. Positions 177–186 (NGTGNGTGGE) are enriched in gly residues.

It belongs to the TUB family.

It is found in the cytoplasm. The protein localises to the nucleus. Its subcellular location is the cell projection. The protein resides in the cilium membrane. It localises to the rhabdomere. This chain is Protein king tubby, found in Drosophila simulans (Fruit fly).